Reading from the N-terminus, the 176-residue chain is Protein Dr1 (176 aa).

Ala-2 is modified (N-acetylalanine). Positions 12 to 75 constitute a Histone-fold domain; it reads TIPRAAINKM…ISPEHVIQAL (64 aa). The Nuclear localization signal signature appears at 100–103; sequence KRRK. Phosphoserine is present on residues Ser-105, Ser-106, Ser-166, and Ser-167. The span at 152–167 shows a compositional bias: low complexity; sequence QLAAASASASNQAGSS. The segment at 152 to 176 is disordered; that stretch reads QLAAASASASNQAGSSQDEEDDDDI.

It belongs to the NC2 beta/DR1 family. As to quaternary structure, heterodimer with DRAP1. DR1 exists in solution as a homotetramer that dissociates during interaction with TBP and then, after complexing with TBP, reassociates at a slow rate, to reconstitute the tetramer. Interacts with NFIL3. Component of the ADA2A-containing complex (ATAC), composed of KAT14, KAT2A, TADA2L, TADA3L, ZZ3, MBIP, WDR5, YEATS2, CCDC101 and DR1. In terms of processing, phosphorylation regulates its interaction with TBP. Not phosphorylated when bound to DRAP1.

The protein resides in the nucleus. The association of the DR1/DRAP1 heterodimer with TBP results in a functional repression of both activated and basal transcription of class II genes. This interaction precludes the formation of a transcription-competent complex by inhibiting the association of TFIIA and/or TFIIB with TBP. Can bind to DNA on its own. Component of the ATAC complex, a complex with histone acetyltransferase activity on histones H3 and H4. The polypeptide is Protein Dr1 (DR1) (Homo sapiens (Human)).